A 198-amino-acid chain; its full sequence is MHPTQRKLMKRIILFLSLLFCIACPAIAGQDIDLVANVKNSTCKSGISNQGNIDLGVVGVGYFSGNVTPESYQPGGKEFTITVSDCALQGTGDVLNQLHIDFRALSGVMAAGSRQIFANEISSGASNVGVVIFSTQDSANTFNVLNASGGSRSVYPVMSDDMNGSSWKFSTRMQKIDPALSVTSGQLMSHVLVDIYYE.

Residues 1-28 (MHPTQRKLMKRIILFLSLLFCIACPAIA) form the signal peptide.

It belongs to the fimbrial protein family.

The protein resides in the fimbrium. Its function is as follows. Part of the yadCKLM-htrE-yadVN fimbrial operon. Could contribute to adhesion to various surfaces in specific environmental niches. This is an uncharacterized protein from Escherichia coli (strain K12).